A 78-amino-acid chain; its full sequence is Conotoxin Cl11.1 (78 aa).

The first 19 residues, 1–19 (MKLALTFLLILMILPLTTG), serve as a signal peptide directing secretion. Residues 20–33 (GKKSDNQALKRLGA) constitute a propeptide that is removed on maturation. 4 disulfide bridges follow: Cys47–Cys61, Cys54–Cys66, Cys60–Cys70, and Cys65–Cys77.

It belongs to the conotoxin I1 superfamily. In terms of tissue distribution, expressed by the venom duct.

Its subcellular location is the secreted. The sequence is that of Conotoxin Cl11.1 from Californiconus californicus (California cone).